Reading from the N-terminus, the 176-residue chain is Large ribosomal subunit protein uL10 (176 aa).

The protein belongs to the universal ribosomal protein uL10 family. Part of the ribosomal stalk of the 50S ribosomal subunit. The N-terminus interacts with L11 and the large rRNA to form the base of the stalk. The C-terminus forms an elongated spine to which L12 dimers bind in a sequential fashion forming a multimeric L10(L12)X complex.

Functionally, forms part of the ribosomal stalk, playing a central role in the interaction of the ribosome with GTP-bound translation factors. The polypeptide is Large ribosomal subunit protein uL10 (Streptomyces avermitilis (strain ATCC 31267 / DSM 46492 / JCM 5070 / NBRC 14893 / NCIMB 12804 / NRRL 8165 / MA-4680)).